Reading from the N-terminus, the 284-residue chain is Tropomyosin (284 aa).

Residues 1 to 273 (MDAIKKKMLA…KEKYKAISDE (273 aa)) adopt a coiled-coil conformation.

The protein belongs to the tropomyosin family. Homodimer.

Tropomyosin, in association with the troponin complex, plays a central role in the calcium dependent regulation of muscle contraction. This Haliotis diversicolor (Abalone) protein is Tropomyosin.